Here is a 472-residue protein sequence, read N- to C-terminus: Glutamine synthetase (472 aa).

The GS beta-grasp domain occupies Asn17–Thr101. The GS catalytic domain maps to Pro109–Ala472. Mg(2+) is bound by residues Glu134 and Glu136. Glu212 serves as a coordination point for ATP. Residues Glu217 and Glu225 each contribute to the Mg(2+) site. Residues Asn269–Gly270 and Gly270 contribute to the L-glutamate site. His274 is a binding site for Mg(2+). ATP-binding positions include Asn276–Ser278 and Ser278. L-glutamate contacts are provided by Arg326, Glu332, and Arg344. Arg344, Arg349, and Lys357 together coordinate ATP. Mg(2+) is bound at residue Glu362. Arg364 lines the L-glutamate pocket. Residue Tyr402 is modified to O-AMP-tyrosine.

The protein belongs to the glutamine synthetase family. As to quaternary structure, oligomer of 12 subunits arranged in the form of two hexameric ring. Requires Mg(2+) as cofactor.

It is found in the cytoplasm. It carries out the reaction L-glutamate + NH4(+) + ATP = L-glutamine + ADP + phosphate + H(+). With respect to regulation, the activity of this enzyme could be controlled by adenylation under conditions of abundant glutamine. Its function is as follows. Catalyzes the ATP-dependent biosynthesis of glutamine from glutamate and ammonia. The polypeptide is Glutamine synthetase (Haemophilus influenzae (strain ATCC 51907 / DSM 11121 / KW20 / Rd)).